We begin with the raw amino-acid sequence, 409 residues long: DNA polymerase IV 2 (409 aa).

The 186-residue stretch at 5–190 folds into the UmuC domain; the sequence is IFMVDMESFF…LPIECLYGVG (186 aa). Mg(2+)-binding residues include Asp-9 and Asp-105. Glu-106 is a catalytic residue.

It belongs to the DNA polymerase type-Y family. As to quaternary structure, monomer. It depends on Mg(2+) as a cofactor.

It localises to the cytoplasm. The enzyme catalyses DNA(n) + a 2'-deoxyribonucleoside 5'-triphosphate = DNA(n+1) + diphosphate. Its function is as follows. Poorly processive, error-prone DNA polymerase involved in untargeted mutagenesis. Copies undamaged DNA at stalled replication forks, which arise in vivo from mismatched or misaligned primer ends. These misaligned primers can be extended by PolIV. Exhibits no 3'-5' exonuclease (proofreading) activity. May be involved in translesional synthesis, in conjunction with the beta clamp from PolIII. The polypeptide is DNA polymerase IV 2 (dinB2) (Halalkalibacterium halodurans (strain ATCC BAA-125 / DSM 18197 / FERM 7344 / JCM 9153 / C-125) (Bacillus halodurans)).